A 321-amino-acid polypeptide reads, in one-letter code: Peroxidase 4 (321 aa).

The first 25 residues, 1 to 25, serve as a signal peptide directing secretion; that stretch reads MASSSFSIVVVALGVLALFAGSSSA. Gln26 is subject to Pyrrolidone carboxylic acid. 4 disulfide bridges follow: Cys36/Cys116, Cys69/Cys74, Cys122/Cys317, and Cys201/Cys226. Residue His67 is the Proton acceptor of the active site. The Ca(2+) site is built by Asp68, Val71, Gly73, Asp75, and Ser77. Pro164 is a substrate binding site. His194 provides a ligand contact to heme b. Thr195 lines the Ca(2+) pocket. N-linked (GlcNAc...) asparagine glycosylation is present at Asn210. Asp241, Thr244, and Asp249 together coordinate Ca(2+).

Belongs to the peroxidase family. Classical plant (class III) peroxidase subfamily. Heme b serves as cofactor. The cofactor is Ca(2+).

The protein localises to the secreted. The catalysed reaction is 2 a phenolic donor + H2O2 = 2 a phenolic radical donor + 2 H2O. Functionally, removal of H(2)O(2), oxidation of toxic reductants, biosynthesis and degradation of lignin, suberization, auxin catabolism, response to environmental stresses such as wounding, pathogen attack and oxidative stress. These functions might be dependent on each isozyme/isoform in each plant tissue. This Vitis vinifera (Grape) protein is Peroxidase 4.